The primary structure comprises 335 residues: Lipoyl synthase (335 aa).

Residues Cys55, Cys60, Cys66, Cys81, Cys85, Cys88, and Ser292 each contribute to the [4Fe-4S] cluster site. The Radical SAM core domain occupies 67–281 (WEDREATFLI…SQRAEEIGFQ (215 aa)).

The protein belongs to the radical SAM superfamily. Lipoyl synthase family. Requires [4Fe-4S] cluster as cofactor.

Its subcellular location is the cytoplasm. It catalyses the reaction [[Fe-S] cluster scaffold protein carrying a second [4Fe-4S](2+) cluster] + N(6)-octanoyl-L-lysyl-[protein] + 2 oxidized [2Fe-2S]-[ferredoxin] + 2 S-adenosyl-L-methionine + 4 H(+) = [[Fe-S] cluster scaffold protein] + N(6)-[(R)-dihydrolipoyl]-L-lysyl-[protein] + 4 Fe(3+) + 2 hydrogen sulfide + 2 5'-deoxyadenosine + 2 L-methionine + 2 reduced [2Fe-2S]-[ferredoxin]. The protein operates within protein modification; protein lipoylation via endogenous pathway; protein N(6)-(lipoyl)lysine from octanoyl-[acyl-carrier-protein]: step 2/2. Catalyzes the radical-mediated insertion of two sulfur atoms into the C-6 and C-8 positions of the octanoyl moiety bound to the lipoyl domains of lipoate-dependent enzymes, thereby converting the octanoylated domains into lipoylated derivatives. The chain is Lipoyl synthase from Micrococcus luteus (strain ATCC 4698 / DSM 20030 / JCM 1464 / CCM 169 / CCUG 5858 / IAM 1056 / NBRC 3333 / NCIMB 9278 / NCTC 2665 / VKM Ac-2230) (Micrococcus lysodeikticus).